The primary structure comprises 145 residues: D-aminoacyl-tRNA deacylase (145 aa).

The short motif at 137-138 (GP) is the Gly-cisPro motif, important for rejection of L-amino acids element.

The protein belongs to the DTD family. Homodimer.

It localises to the cytoplasm. It catalyses the reaction glycyl-tRNA(Ala) + H2O = tRNA(Ala) + glycine + H(+). The catalysed reaction is a D-aminoacyl-tRNA + H2O = a tRNA + a D-alpha-amino acid + H(+). An aminoacyl-tRNA editing enzyme that deacylates mischarged D-aminoacyl-tRNAs. Also deacylates mischarged glycyl-tRNA(Ala), protecting cells against glycine mischarging by AlaRS. Acts via tRNA-based rather than protein-based catalysis; rejects L-amino acids rather than detecting D-amino acids in the active site. By recycling D-aminoacyl-tRNA to D-amino acids and free tRNA molecules, this enzyme counteracts the toxicity associated with the formation of D-aminoacyl-tRNA entities in vivo and helps enforce protein L-homochirality. This is D-aminoacyl-tRNA deacylase from Shewanella pealeana (strain ATCC 700345 / ANG-SQ1).